A 908-amino-acid chain; its full sequence is Mechanosensitive ion channel protein 8 (908 aa).

Residues 1 to 25 (MDFRNSFKSHSSYKQIRSPGDQSEP) show a composition bias toward polar residues. Disordered regions lie at residues 1 to 88 (MDFR…HTAV), 148 to 172 (DQENDDVSHQTMPTPTSTARTSFDA), 190 to 221 (VAGSVPSSSSHSSSSSSATMRTNQDQPQLQEE), and 242 to 265 (VKTRSRLQDPPREEETPYSGWRSG). The segment covering 31-70 (PILHDHHPDHSGMVVDDQKPDSTRSSLDDGRNAPVERDAS) has biased composition (basic and acidic residues). 2 stretches are compositionally biased toward polar residues: residues 75–85 (QDNTTGTSTDH) and 156–171 (HQTMPTPTSTARTSFD). Low complexity predominate over residues 196-206 (SSSSHSSSSSS). The segment covering 207–218 (ATMRTNQDQPQL) has biased composition (polar residues). Over residues 247 to 256 (RLQDPPREEE) the composition is skewed to basic and acidic residues. The next 6 helical transmembrane spans lie at 298 to 318 (AITLLQWLSLVAIIAALACSL), 341 to 361 (LVLICGRLVSGWGIRIVVFFI), 381 to 401 (AVQNCLWLGLVLLAWHFLFDK), 411 to 431 (FLPYVTKILVCFLLSTILWLI), 673 to 693 (MINIVTAIVIVVIWLVLLEIA), and 709 to 729 (AFIFGNTVKTVFESIIFLFIV).

The protein belongs to the MscS (TC 1.A.23) family. In terms of tissue distribution, expressed in tricellular and mature pollen, and in germinating tube. Not detected in leaves or roots.

Its subcellular location is the cell membrane. The protein localises to the endomembrane system. Its activity is regulated as follows. Not regulated by MgCl(2), ruthenium red or tetramethylammonium-Cl. In terms of biological role, mechanosensitive channel that opens in response to stretch forces in the membrane lipid bilayer. Exhibits a 6.3-fold preference for chloride over sodium. Regulates osmotic forces during pollen hydration and germination. The sequence is that of Mechanosensitive ion channel protein 8 from Arabidopsis thaliana (Mouse-ear cress).